We begin with the raw amino-acid sequence, 195 residues long: Imidazoleglycerol-phosphate dehydratase (195 aa).

The protein belongs to the imidazoleglycerol-phosphate dehydratase family.

It is found in the cytoplasm. The catalysed reaction is D-erythro-1-(imidazol-4-yl)glycerol 3-phosphate = 3-(imidazol-4-yl)-2-oxopropyl phosphate + H2O. The protein operates within amino-acid biosynthesis; L-histidine biosynthesis; L-histidine from 5-phospho-alpha-D-ribose 1-diphosphate: step 6/9. The sequence is that of Imidazoleglycerol-phosphate dehydratase from Methanosphaerula palustris (strain ATCC BAA-1556 / DSM 19958 / E1-9c).